A 447-amino-acid polypeptide reads, in one-letter code: Pup--protein ligase 2 (447 aa).

Glu-4 is a binding site for Mg(2+). ATP is bound at residue Arg-48. Mg(2+) is bound at residue Tyr-50. Asp-52 functions as the Proton acceptor in the catalytic mechanism. Glu-58 lines the Mg(2+) pocket. The ATP site is built by Thr-61 and Trp-414.

The protein belongs to the Pup ligase/Pup deamidase family. Pup-conjugating enzyme subfamily.

It carries out the reaction ATP + [prokaryotic ubiquitin-like protein]-L-glutamate + [protein]-L-lysine = ADP + phosphate + N(6)-([prokaryotic ubiquitin-like protein]-gamma-L-glutamyl)-[protein]-L-lysine.. It participates in protein degradation; proteasomal Pup-dependent pathway. The protein operates within protein modification; protein pupylation. In terms of biological role, catalyzes the covalent attachment of the prokaryotic ubiquitin-like protein modifier Pup to the proteasomal substrate proteins, thereby targeting them for proteasomal degradation. This tagging system is termed pupylation. The ligation reaction involves the side-chain carboxylate of the C-terminal glutamate of Pup and the side-chain amino group of a substrate lysine. The sequence is that of Pup--protein ligase 2 from Rhodococcus erythropolis (Arthrobacter picolinophilus).